The following is a 178-amino-acid chain: MSENQNPPPSPEEIEAAMSANAADELNRLQGELAELKAKSADLADQFLRAKAEAENARRRAEDEVAKARKFGIESFAESLLPVCDSLDAALAIENATAEQLREGSDATLRQLMSALERNKVVIVNPEAGTKFDPHQHQAISMVPADQEANTVVSVLQKGYLIFDRVLRPALVTVAAPK.

Over residues 1–11 the composition is skewed to pro residues; that stretch reads MSENQNPPPSP. Residues 1–23 form a disordered region; the sequence is MSENQNPPPSPEEIEAAMSANAA.

It belongs to the GrpE family. Homodimer.

It is found in the cytoplasm. In terms of biological role, participates actively in the response to hyperosmotic and heat shock by preventing the aggregation of stress-denatured proteins, in association with DnaK and GrpE. It is the nucleotide exchange factor for DnaK and may function as a thermosensor. Unfolded proteins bind initially to DnaJ; upon interaction with the DnaJ-bound protein, DnaK hydrolyzes its bound ATP, resulting in the formation of a stable complex. GrpE releases ADP from DnaK; ATP binding to DnaK triggers the release of the substrate protein, thus completing the reaction cycle. Several rounds of ATP-dependent interactions between DnaJ, DnaK and GrpE are required for fully efficient folding. The chain is Protein GrpE from Acidovorax sp. (strain JS42).